A 23-amino-acid chain; its full sequence is Basic phospholipase A2 CB1 (23 aa).

As to quaternary structure, heterodimer of an acidic subunit and a basic chain. The acidic subunit is non-toxic, without enzymatic activity and comprises 3 peptides that are cross-linked by 7 disulfide bridges. The basic subunit is toxic, has phospholipase A2 activity and is composed of a single chain. Ca(2+) is required as a cofactor. Contains 7 disulfide bonds. Expressed by the venom gland.

It is found in the secreted. The enzyme catalyses a 1,2-diacyl-sn-glycero-3-phosphocholine + H2O = a 1-acyl-sn-glycero-3-phosphocholine + a fatty acid + H(+). Functionally, snake venom phospholipase A2 (PLA2) that shows presynaptic neurotoxicity. PLA2 catalyzes the calcium-dependent hydrolysis of the 2-acyl groups in 3-sn-phosphoglycerides. The chain is Basic phospholipase A2 CB1 from Crotalus basiliscus (Mexican west-coast rattlesnake).